A 110-amino-acid polypeptide reads, in one-letter code: Iron-sulfur cluster assembly protein CyaY (110 aa).

It belongs to the frataxin family.

Its function is as follows. Involved in iron-sulfur (Fe-S) cluster assembly. May act as a regulator of Fe-S biogenesis. In Pseudomonas putida (strain GB-1), this protein is Iron-sulfur cluster assembly protein CyaY.